The primary structure comprises 1007 residues: Bifunctional glutamine synthetase adenylyltransferase/adenylyl-removing enzyme (1007 aa).

The tract at residues 1-496 (MTREQLSLTV…LHERLFYRPL (496 aa)) is adenylyl removase. The tract at residues 505–1007 (NEDARLSGEA…GPPQRPATTA (503 aa)) is adenylyl transferase.

This sequence belongs to the GlnE family. It depends on Mg(2+) as a cofactor.

The enzyme catalyses [glutamine synthetase]-O(4)-(5'-adenylyl)-L-tyrosine + phosphate = [glutamine synthetase]-L-tyrosine + ADP. It carries out the reaction [glutamine synthetase]-L-tyrosine + ATP = [glutamine synthetase]-O(4)-(5'-adenylyl)-L-tyrosine + diphosphate. Involved in the regulation of glutamine synthetase GlnA, a key enzyme in the process to assimilate ammonia. When cellular nitrogen levels are high, the C-terminal adenylyl transferase (AT) inactivates GlnA by covalent transfer of an adenylyl group from ATP to specific tyrosine residue of GlnA, thus reducing its activity. Conversely, when nitrogen levels are low, the N-terminal adenylyl removase (AR) activates GlnA by removing the adenylyl group by phosphorolysis, increasing its activity. The regulatory region of GlnE binds the signal transduction protein PII (GlnB) which indicates the nitrogen status of the cell. This Leifsonia xyli subsp. xyli (strain CTCB07) protein is Bifunctional glutamine synthetase adenylyltransferase/adenylyl-removing enzyme.